The sequence spans 102 residues: Large ribosomal subunit protein uL23c (102 aa).

Belongs to the universal ribosomal protein uL23 family. Part of the 50S ribosomal subunit.

Its subcellular location is the plastid. The protein resides in the chloroplast. Binds to 23S rRNA. This chain is Large ribosomal subunit protein uL23c (rpl23), found in Phaeodactylum tricornutum (strain CCAP 1055/1).